Reading from the N-terminus, the 294-residue chain is Segregation and condensation protein A (294 aa).

This sequence belongs to the ScpA family. In terms of assembly, component of a cohesin-like complex composed of ScpA, ScpB and the Smc homodimer, in which ScpA and ScpB bind to the head domain of Smc. The presence of the three proteins is required for the association of the complex with DNA.

The protein resides in the cytoplasm. Participates in chromosomal partition during cell division. May act via the formation of a condensin-like complex containing Smc and ScpB that pull DNA away from mid-cell into both cell halves. This is Segregation and condensation protein A from Ureaplasma parvum serovar 3 (strain ATCC 700970).